Consider the following 328-residue polypeptide: Ribose-phosphate pyrophosphokinase (328 aa).

Residues 39 to 41 and 98 to 99 contribute to the ATP site; these read DGE and RQ. Mg(2+) is bound by residues histidine 132 and aspartate 172. Residue lysine 195 is part of the active site. D-ribose 5-phosphate contacts are provided by residues arginine 197, aspartate 221, and 225–229; that span reads DTGGT.

This sequence belongs to the ribose-phosphate pyrophosphokinase family. Class I subfamily. In terms of assembly, homohexamer. Requires Mg(2+) as cofactor.

It localises to the cytoplasm. It carries out the reaction D-ribose 5-phosphate + ATP = 5-phospho-alpha-D-ribose 1-diphosphate + AMP + H(+). Its pathway is metabolic intermediate biosynthesis; 5-phospho-alpha-D-ribose 1-diphosphate biosynthesis; 5-phospho-alpha-D-ribose 1-diphosphate from D-ribose 5-phosphate (route I): step 1/1. Its function is as follows. Involved in the biosynthesis of the central metabolite phospho-alpha-D-ribosyl-1-pyrophosphate (PRPP) via the transfer of pyrophosphoryl group from ATP to 1-hydroxyl of ribose-5-phosphate (Rib-5-P). This chain is Ribose-phosphate pyrophosphokinase, found in Mycoplasma pneumoniae (strain ATCC 29342 / M129 / Subtype 1) (Mycoplasmoides pneumoniae).